Here is a 265-residue protein sequence, read N- to C-terminus: MSDIITAFILGIVEGLAEFLPISSTGHLILVGHLLGFEGERAKTFEIVIQLGAILAIAILYHKRLVSLCNIKPLLRKEKKFNAFHVFLGVFPAVVAGLLLHDIIKTYLFQPYTVVIGLVAGAILMIFAEVKKQEATSYSLDDLTYRQALTIGLFQCLAVYPGFSRAGSTISGGLLAKVNYKTASEFSFLIALPVMVGATGLDLLKSWTYLSVDDIPMFAVGFITSFIVAMLAVVTFLKLLEKIGLKPFAYYRILLAILFTVFVLL.

Helical transmembrane passes span Ile4–Ser24, Ala42–His62, Phe84–Ile104, Leu108–Ala128, Ser184–Leu204, Met217–Leu237, and Leu245–Leu265.

This sequence belongs to the UppP family.

The protein resides in the cell membrane. The catalysed reaction is di-trans,octa-cis-undecaprenyl diphosphate + H2O = di-trans,octa-cis-undecaprenyl phosphate + phosphate + H(+). Functionally, catalyzes the dephosphorylation of undecaprenyl diphosphate (UPP). Confers resistance to bacitracin. This Bacillus thuringiensis subsp. konkukian (strain 97-27) protein is Undecaprenyl-diphosphatase 1.